The primary structure comprises 412 residues: Lipoyl synthase, mitochondrial (412 aa).

Residues 1–28 (MASIAPSLKRAHAPLRKALTASSTIRAF) constitute a mitochondrion transit peptide. Cys-124, Cys-129, Cys-135, Cys-155, Cys-159, Cys-162, and Ser-372 together coordinate [4Fe-4S] cluster. Positions 138–361 (GSDKNAATAT…NKRALDMGFL (224 aa)) constitute a Radical SAM core domain.

It belongs to the radical SAM superfamily. Lipoyl synthase family. The cofactor is [4Fe-4S] cluster.

Its subcellular location is the mitochondrion. The catalysed reaction is [[Fe-S] cluster scaffold protein carrying a second [4Fe-4S](2+) cluster] + N(6)-octanoyl-L-lysyl-[protein] + 2 oxidized [2Fe-2S]-[ferredoxin] + 2 S-adenosyl-L-methionine + 4 H(+) = [[Fe-S] cluster scaffold protein] + N(6)-[(R)-dihydrolipoyl]-L-lysyl-[protein] + 4 Fe(3+) + 2 hydrogen sulfide + 2 5'-deoxyadenosine + 2 L-methionine + 2 reduced [2Fe-2S]-[ferredoxin]. The protein operates within protein modification; protein lipoylation via endogenous pathway; protein N(6)-(lipoyl)lysine from octanoyl-[acyl-carrier-protein]: step 2/2. Catalyzes the radical-mediated insertion of two sulfur atoms into the C-6 and C-8 positions of the octanoyl moiety bound to the lipoyl domains of lipoate-dependent enzymes, thereby converting the octanoylated domains into lipoylated derivatives. This chain is Lipoyl synthase, mitochondrial, found in Fusarium vanettenii (strain ATCC MYA-4622 / CBS 123669 / FGSC 9596 / NRRL 45880 / 77-13-4) (Fusarium solani subsp. pisi).